A 34-amino-acid chain; its full sequence is DDCLGMFSSCDPDNDKCCEGRKCNRKDKWCKYVL.

Intrachain disulfides connect Cys3/Cys18, Cys10/Cys23, and Cys17/Cys30. Position 34 is a leucine amide (Leu34).

This sequence belongs to the neurotoxin 10 (Hwtx-1) family. 34 (Jztx-26) subfamily. As to expression, expressed by the venom gland.

Its subcellular location is the secreted. Spider venom neurotoxin that blocks voltage-gated sodium channels Nav1.3/SCN3A and Nav1.8/SCN10A in human (IC(50)=2 uM and IC(50)=4 uM, respectively) and rat (IC(50)=2 uM and IC(50)=2.5 uM, respectively). The polypeptide is Beta-theraphotoxin-Pmu1a (Pterinochilus murinus (Mombasa golden starburst baboon spider)).